We begin with the raw amino-acid sequence, 365 residues long: Protein-glutamate methylesterase/protein-glutamine glutaminase (365 aa).

Positions 5-122 (KVLIVDDSAF…SLDIRKIGEK (118 aa)) constitute a Response regulatory domain. Position 56 is a 4-aspartylphosphate (D56). The span at 146–155 (IKKEKQDESS) shows a compositional bias: basic and acidic residues. The disordered stretch occupies residues 146 to 167 (IKKEKQDESSTPKPQVEKTSGL). A compositionally biased stretch (polar residues) spans 156–167 (TPKPQVEKTSGL). Residues 177–363 (ILIGSSTGGP…LEIIKFAKKI (187 aa)) form the CheB-type methylesterase domain. Residues S182, H208, and D305 contribute to the active site.

The protein belongs to the CheB family. Post-translationally, phosphorylated by CheA. Phosphorylation of the N-terminal regulatory domain activates the methylesterase activity.

The protein resides in the cytoplasm. It carries out the reaction [protein]-L-glutamate 5-O-methyl ester + H2O = L-glutamyl-[protein] + methanol + H(+). It catalyses the reaction L-glutaminyl-[protein] + H2O = L-glutamyl-[protein] + NH4(+). Functionally, involved in chemotaxis. Part of a chemotaxis signal transduction system that modulates chemotaxis in response to various stimuli. Catalyzes the demethylation of specific methylglutamate residues introduced into the chemoreceptors (methyl-accepting chemotaxis proteins or MCP) by CheR. Also mediates the irreversible deamidation of specific glutamine residues to glutamic acid. This Methanococcus maripaludis (strain DSM 14266 / JCM 13030 / NBRC 101832 / S2 / LL) protein is Protein-glutamate methylesterase/protein-glutamine glutaminase.